We begin with the raw amino-acid sequence, 67 residues long: MKKDLHPEYHEATVTCASCGNTFKVGSTKENINVEVCSQCHPFYTGRQRFVEHGGRVEKFKKKYNMD.

Belongs to the bacterial ribosomal protein bL31 family. Type A subfamily. As to quaternary structure, part of the 50S ribosomal subunit.

Functionally, binds the 23S rRNA. This Finegoldia magna (strain ATCC 29328 / DSM 20472 / WAL 2508) (Peptostreptococcus magnus) protein is Large ribosomal subunit protein bL31.